Consider the following 341-residue polypeptide: Tetraacyldisaccharide 4'-kinase (341 aa).

54 to 61 (TVGGAGKT) contributes to the ATP binding site.

This sequence belongs to the LpxK family.

It catalyses the reaction a lipid A disaccharide + ATP = a lipid IVA + ADP + H(+). Its pathway is glycolipid biosynthesis; lipid IV(A) biosynthesis; lipid IV(A) from (3R)-3-hydroxytetradecanoyl-[acyl-carrier-protein] and UDP-N-acetyl-alpha-D-glucosamine: step 6/6. Its function is as follows. Transfers the gamma-phosphate of ATP to the 4'-position of a tetraacyldisaccharide 1-phosphate intermediate (termed DS-1-P) to form tetraacyldisaccharide 1,4'-bis-phosphate (lipid IVA). This chain is Tetraacyldisaccharide 4'-kinase, found in Brucella anthropi (strain ATCC 49188 / DSM 6882 / CCUG 24695 / JCM 21032 / LMG 3331 / NBRC 15819 / NCTC 12168 / Alc 37) (Ochrobactrum anthropi).